The primary structure comprises 592 residues: Elongation factor 1 alpha-like protein (592 aa).

Disordered regions lie at residues 1-35 (MSRHRDVKNLDLDDYELDEEPGEEELTEEQEEEFR) and 78-159 (SSKA…KQNP). Residues 12 to 32 (LDDYELDEEPGEEELTEEQEE) show a composition bias toward acidic residues. Basic and acidic residues predominate over residues 82-111 (GAKEKQNTDSQKEKKQNKSKEALADAKDPL). Residues 113-124 (ESSNGIKNLSLN) are compositionally biased toward polar residues. Positions 137–151 (VKMKNSSESDNQPEK) are enriched in basic and acidic residues. Residues 175–401 (KPVVHLVVTG…DQLVPPEKPY (227 aa)) enclose the tr-type G domain. A G1 region spans residues 184–191 (GHVDSGKS). A GTP-binding site is contributed by 184–191 (GHVDSGKS). Residues 240–244 (GVTMD) form a G2 region. The tract at residues 261-264 (DAPG) is G3. Residues 323–326 (NKLD) and 352–355 (FKTS) contribute to the GTP site. Positions 323-326 (NKLD) are G4. The G5 stretch occupies residues 363–365 (SAI).

It belongs to the TRAFAC class translation factor GTPase superfamily. Classic translation factor GTPase family. Component of the Dom34-Hbs1 complex, also named Pelota-HBS1L complex, composed of dom34 and hbs1.

It is found in the cytoplasm. It catalyses the reaction GTP + H2O = GDP + phosphate + H(+). Its function is as follows. GTPase component of the Dom34-Hbs1 complex, a complex that recognizes stalled ribosomes and triggers the No-Go Decay (NGD) pathway. The Dom34-Hbs1 complex recognizes ribosomes stalled at the 3' end of an mRNA and engages stalled ribosomes by destabilizing mRNA in the mRNA channel. Following ribosome-binding, the Pelota-HBS1L complex promotes the disassembly of stalled ribosomes, followed by degradation of damaged mRNAs as part of the NGD pathway. This is Elongation factor 1 alpha-like protein from Schizosaccharomyces pombe (strain 972 / ATCC 24843) (Fission yeast).